Consider the following 104-residue polypeptide: L-rhamnose mutarotase (104 aa).

Residue Tyr18 participates in substrate binding. His22 acts as the Proton donor in catalysis. Residues Tyr41 and 76-77 contribute to the substrate site; that span reads WW.

This sequence belongs to the rhamnose mutarotase family. As to quaternary structure, homodimer.

It is found in the cytoplasm. The catalysed reaction is alpha-L-rhamnose = beta-L-rhamnose. Its pathway is carbohydrate metabolism; L-rhamnose metabolism. Its function is as follows. Involved in the anomeric conversion of L-rhamnose. In Burkholderia orbicola (strain MC0-3), this protein is L-rhamnose mutarotase.